A 96-amino-acid polypeptide reads, in one-letter code: UPF0213 protein BCE33L0031 (96 aa).

Positions 4–79 (NKHCFYVVEC…KQLNRKQKEE (76 aa)) constitute a GIY-YIG domain.

Belongs to the UPF0213 family.

This is UPF0213 protein BCE33L0031 from Bacillus cereus (strain ZK / E33L).